Here is a 354-residue protein sequence, read N- to C-terminus: UDP-2,3-diacetamido-2,3-dideoxy-D-glucuronate 2-epimerase (354 aa).

Belongs to the UDP-N-acetylglucosamine 2-epimerase family.

The enzyme catalyses UDP-2,3-diacetamido-2,3-dideoxy-alpha-D-glucuronate = UDP-2,3-diacetamido-2,3-dideoxy-alpha-D-mannuronate. Its pathway is bacterial outer membrane biogenesis; LPS O-antigen biosynthesis. Functionally, plays a role in the biosynthesis of B-band O antigen for serotype O5. Catalyzes the epimerization of UDP-2,3-diacetamido-2,3-dideoxy-alpha-D-glucuronic acid (UDP-alpha-D-GlcNAc3NAcA) to UDP-2,3-diacetamido-2,3-dideoxy-alpha-D-mannuronic acid (UDP-alpha-D-ManNAc3NAcA). Exhibits high specificity towards the substrate as UDP-alpha-D-GlcNAc, UDP-alpha-D-GlcNAcA (UDP-2-acetamido-2-deoxy-alpha-D-glucuronic acid) and UDP-alpha-D-GlcNAc3NAc (UDP-2,3-diacetamido-2,3-dideoxy-alpha-D-glucose) cannot act as substrates. In Pseudomonas aeruginosa (strain ATCC 15692 / DSM 22644 / CIP 104116 / JCM 14847 / LMG 12228 / 1C / PRS 101 / PAO1), this protein is UDP-2,3-diacetamido-2,3-dideoxy-D-glucuronate 2-epimerase.